Here is a 590-residue protein sequence, read N- to C-terminus: V-type ATP synthase alpha chain (590 aa).

Residue 234 to 241 participates in ATP binding; sequence GGFGAGKT.

Belongs to the ATPase alpha/beta chains family.

It catalyses the reaction ATP + H2O + 4 H(+)(in) = ADP + phosphate + 5 H(+)(out). In terms of biological role, produces ATP from ADP in the presence of a proton gradient across the membrane. The V-type alpha chain is a catalytic subunit. The chain is V-type ATP synthase alpha chain from Halothermothrix orenii (strain H 168 / OCM 544 / DSM 9562).